Reading from the N-terminus, the 142-residue chain is Movement protein (142 aa).

A disordered region spans residues 1–142 (MDLPEDQARF…LDRSESLSRY (142 aa)). Composition is skewed to polar residues over residues 9-22 (RFTN…TSME) and 33-43 (LYQSASRSQMA). Residues 50–62 (SIISRTSSWRTSP) are compositionally biased toward low complexity. 2 stretches are compositionally biased toward polar residues: residues 74–95 (MNSI…SASP) and 113–124 (TTLQRTNSGFST). The segment covering 125–142 (KETEMPRLLDRSESLSRY) has biased composition (basic and acidic residues).

Belongs to the luteoviruses movement protein family.

In terms of biological role, transports viral genome to neighboring plant cells directly through plasmosdesmata, without any budding. The movement protein allows efficient cell to cell propagation, by bypassing the host cell wall barrier. This chain is Movement protein, found in Cicer arietinum (Chickpea).